The primary structure comprises 194 residues: Protein GrpE (194 aa).

Belongs to the GrpE family. Homodimer.

Its subcellular location is the cytoplasm. Its function is as follows. Participates actively in the response to hyperosmotic and heat shock by preventing the aggregation of stress-denatured proteins, in association with DnaK and GrpE. It is the nucleotide exchange factor for DnaK and may function as a thermosensor. Unfolded proteins bind initially to DnaJ; upon interaction with the DnaJ-bound protein, DnaK hydrolyzes its bound ATP, resulting in the formation of a stable complex. GrpE releases ADP from DnaK; ATP binding to DnaK triggers the release of the substrate protein, thus completing the reaction cycle. Several rounds of ATP-dependent interactions between DnaJ, DnaK and GrpE are required for fully efficient folding. This is Protein GrpE from Aliivibrio fischeri (strain MJ11) (Vibrio fischeri).